A 662-amino-acid chain; its full sequence is Transketolase (662 aa).

Position 28 (histidine 28) interacts with substrate. Thiamine diphosphate contacts are provided by residues histidine 68 and 115-117 (GPL). Aspartate 156 provides a ligand contact to Mg(2+). Glycine 157 and asparagine 186 together coordinate thiamine diphosphate. Residues asparagine 186 and isoleucine 188 each contribute to the Mg(2+) site. Substrate is bound by residues histidine 261, arginine 356, and serine 383. Thiamine diphosphate is bound at residue histidine 261. Residue glutamate 410 is the Proton donor of the active site. Phenylalanine 436 lines the thiamine diphosphate pocket. The substrate site is built by histidine 460, aspartate 468, and arginine 519.

Belongs to the transketolase family. Homodimer. Requires Mg(2+) as cofactor. The cofactor is Ca(2+). Mn(2+) is required as a cofactor. Co(2+) serves as cofactor. It depends on thiamine diphosphate as a cofactor.

It catalyses the reaction D-sedoheptulose 7-phosphate + D-glyceraldehyde 3-phosphate = aldehydo-D-ribose 5-phosphate + D-xylulose 5-phosphate. It functions in the pathway carbohydrate biosynthesis; Calvin cycle. Its pathway is carbohydrate degradation; pentose phosphate pathway. Its function is as follows. Catalyzes the transfer of a two-carbon ketol group from a ketose donor to an aldose acceptor, via a covalent intermediate with the cofactor thiamine pyrophosphate. This Staphylococcus epidermidis (strain ATCC 35984 / DSM 28319 / BCRC 17069 / CCUG 31568 / BM 3577 / RP62A) protein is Transketolase (tkt).